The following is a 622-amino-acid chain: Low affinity potassium transport system protein Kup (622 aa).

12 consecutive transmembrane segments (helical) span residues 9–29 (LSAV…TSPL), 46–66 (PDVV…VVSV), 101–121 (ILVV…VITP), 137–157 (PALD…LFVI), 165–185 (VGKL…LLGL), 213–233 (VSFF…ALYA), 247–267 (WFTV…ALLL), 276–296 (PFFL…ATLA), 337–357 (IYIP…IIGF), 363–383 (LAAA…ILFC), 395–415 (FLVV…FSAN), and 416–436 (VLKL…MFII).

The protein belongs to the HAK/KUP transporter (TC 2.A.72) family.

It is found in the cell inner membrane. The enzyme catalyses K(+)(in) + H(+)(in) = K(+)(out) + H(+)(out). Functionally, responsible for the low-affinity transport of potassium into the cell. Likely operates as a K(+):H(+) symporter. In Yersinia pestis bv. Antiqua (strain Antiqua), this protein is Low affinity potassium transport system protein Kup.